A 208-amino-acid polypeptide reads, in one-letter code: V-type ATP synthase subunit D (208 aa).

Belongs to the V-ATPase D subunit family.

In terms of biological role, produces ATP from ADP in the presence of a proton gradient across the membrane. The protein is V-type ATP synthase subunit D of Streptococcus pyogenes serotype M3 (strain ATCC BAA-595 / MGAS315).